The following is a 2289-amino-acid chain: DNA polymerase II large subunit (2289 aa).

Disordered stretches follow at residues 279 to 330 (IGSD…SPRA) and 544 to 563 (SDTNSASGNTSLRANTNTDD). Over residues 292–304 (GEADIVKTDKDTN) the composition is skewed to basic and acidic residues. Residues 305–318 (ESETEDGIDNDDYN) show a composition bias toward acidic residues. Residues 544-557 (SDTNSASGNTSLRA) are compositionally biased toward polar residues. 2 consecutive DOD-type homing endonuclease domains span residues 1222–1367 (LLGY…RLGI) and 1755–1911 (LLGQ…RLGV).

The protein belongs to the archaeal DNA polymerase II family. As to quaternary structure, heterodimer of a large subunit and a small subunit. Post-translationally, this protein undergoes a protein self splicing that involves a post-translational excision of the intervening region (intein) followed by peptide ligation.

The enzyme catalyses DNA(n) + a 2'-deoxyribonucleoside 5'-triphosphate = DNA(n+1) + diphosphate. The catalysed reaction is Exonucleolytic cleavage in the 3'- to 5'-direction to yield nucleoside 5'-phosphates.. In terms of biological role, possesses two activities: a DNA synthesis (polymerase) and an exonucleolytic activity that degrades single-stranded DNA in the 3'- to 5'-direction. Has a template-primer preference which is characteristic of a replicative DNA polymerase. The protein is DNA polymerase II large subunit of Haloquadratum walsbyi (strain DSM 16790 / HBSQ001).